The sequence spans 221 residues: GTP cyclohydrolase-2 (221 aa).

GTP is bound at residue 63-67 (RLHSE). Positions 68, 79, and 81 each coordinate Zn(2+). GTP is bound by residues Gln84, 107–109 (EGR), and Thr129. The active-site Proton acceptor is Asp141. Arg143 (nucleophile) is an active-site residue. GTP contacts are provided by Ser164 and Lys169.

This sequence belongs to the GTP cyclohydrolase II family. The cofactor is Zn(2+).

It catalyses the reaction GTP + 4 H2O = 2,5-diamino-6-hydroxy-4-(5-phosphoribosylamino)-pyrimidine + formate + 2 phosphate + 3 H(+). It functions in the pathway cofactor biosynthesis; riboflavin biosynthesis; 5-amino-6-(D-ribitylamino)uracil from GTP: step 1/4. In terms of biological role, catalyzes the conversion of GTP to 2,5-diamino-6-ribosylamino-4(3H)-pyrimidinone 5'-phosphate (DARP), formate and pyrophosphate. This Streptomyces coelicolor (strain ATCC BAA-471 / A3(2) / M145) protein is GTP cyclohydrolase-2.